The following is a 119-amino-acid chain: Large ribosomal subunit protein bL20 (119 aa).

Belongs to the bacterial ribosomal protein bL20 family.

Functionally, binds directly to 23S ribosomal RNA and is necessary for the in vitro assembly process of the 50S ribosomal subunit. It is not involved in the protein synthesizing functions of that subunit. The sequence is that of Large ribosomal subunit protein bL20 from Bradyrhizobium sp. (strain BTAi1 / ATCC BAA-1182).